The chain runs to 452 residues: Bifunctional protein GlmU (452 aa).

The interval 1-225 is pyrophosphorylase; it reads MDVVILAAGL…ENELIGINTR (225 aa). UDP-N-acetyl-alpha-D-glucosamine-binding positions include 6-9, Lys20, Gln71, and 76-77; these read LAAG and GT. Residue Asp99 coordinates Mg(2+). Positions 136, 151, 166, and 223 each coordinate UDP-N-acetyl-alpha-D-glucosamine. Asn223 lines the Mg(2+) pocket. The segment at 226-246 is linker; it reads AELSLAMRYLRDRIVKGWMEK. Positions 247 to 452 are N-acetyltransferase; the sequence is GITFYDPALV…LGWAKKKRKQ (206 aa). UDP-N-acetyl-alpha-D-glucosamine is bound by residues Arg329 and Lys347. The active-site Proton acceptor is the His359. UDP-N-acetyl-alpha-D-glucosamine is bound by residues Tyr362 and Asn373. Residues Ala376, 382–383, Ser401, Ala419, and Arg436 contribute to the acetyl-CoA site; that span reads NY.

This sequence in the N-terminal section; belongs to the N-acetylglucosamine-1-phosphate uridyltransferase family. The protein in the C-terminal section; belongs to the transferase hexapeptide repeat family. As to quaternary structure, homotrimer. It depends on Mg(2+) as a cofactor.

The protein resides in the cytoplasm. It catalyses the reaction alpha-D-glucosamine 1-phosphate + acetyl-CoA = N-acetyl-alpha-D-glucosamine 1-phosphate + CoA + H(+). The catalysed reaction is N-acetyl-alpha-D-glucosamine 1-phosphate + UTP + H(+) = UDP-N-acetyl-alpha-D-glucosamine + diphosphate. Its pathway is nucleotide-sugar biosynthesis; UDP-N-acetyl-alpha-D-glucosamine biosynthesis; N-acetyl-alpha-D-glucosamine 1-phosphate from alpha-D-glucosamine 6-phosphate (route II): step 2/2. It functions in the pathway nucleotide-sugar biosynthesis; UDP-N-acetyl-alpha-D-glucosamine biosynthesis; UDP-N-acetyl-alpha-D-glucosamine from N-acetyl-alpha-D-glucosamine 1-phosphate: step 1/1. The protein operates within bacterial outer membrane biogenesis; LPS lipid A biosynthesis. In terms of biological role, catalyzes the last two sequential reactions in the de novo biosynthetic pathway for UDP-N-acetylglucosamine (UDP-GlcNAc). The C-terminal domain catalyzes the transfer of acetyl group from acetyl coenzyme A to glucosamine-1-phosphate (GlcN-1-P) to produce N-acetylglucosamine-1-phosphate (GlcNAc-1-P), which is converted into UDP-GlcNAc by the transfer of uridine 5-monophosphate (from uridine 5-triphosphate), a reaction catalyzed by the N-terminal domain. This Thermodesulfovibrio yellowstonii (strain ATCC 51303 / DSM 11347 / YP87) protein is Bifunctional protein GlmU.